The sequence spans 274 residues: Protein TIC 20-I, chloroplastic (274 aa).

Residues 1–65 (MITGYSTPSA…ELPRVSRGVP (65 aa)) constitute a chloroplast transit peptide. Helical transmembrane passes span 130-152 (LPYL…LHPF), 167-187 (IGRL…LGIV), 200-220 (VVMG…SKWM), and 229-249 (FGMH…LESI).

Belongs to the Tic20 family. In terms of assembly, part of the Tic complex. Component of the 1-MD complex, composed of TIC20-I, TIC214, TIC100 and TIC56. Interacts with the translocating preproteins. Hydrolysis of ATP is essential for the formation of this complex. The 1-MD complex interacts with TIC21. As to expression, expressed in leaves, shoots and roots. High expression in mature photosynthetic tissues. Lower levels in non-photosynthetic tissues and roots.

The protein resides in the plastid. It is found in the chloroplast inner membrane. In terms of biological role, involved in protein precursor import into chloroplasts. May be part of an intermediate translocation complex acting as a protein-conducting channel at the inner envelope. Seems to be specific for photosynthesis-related pre-proteins. Partially redundant with TIC20-IV, but not with TIC20-II or TIC20-V. The chain is Protein TIC 20-I, chloroplastic from Arabidopsis thaliana (Mouse-ear cress).